Consider the following 260-residue polypeptide: Neuraminyllactose-binding hemagglutinin (260 aa).

The first 27 residues, 1-27 (MKTNGHFKDFAWKKCLLGASVGALLVG), serve as a signal peptide directing secretion. Residue C28 is the site of N-palmitoyl cysteine attachment. C28 is lipidated: S-diacylglycerol cysteine. The tract at residues 134-139 (KRTIQK) is N-acetyl-neuraminyl-alpha(2,3)-lactose binding motif.

It is found in the cell outer membrane. In Helicobacter pylori (Campylobacter pylori), this protein is Neuraminyllactose-binding hemagglutinin (hpaA).